A 354-amino-acid polypeptide reads, in one-letter code: Uroporphyrinogen decarboxylase (354 aa).

Substrate-binding positions include 27–31, aspartate 77, tyrosine 154, threonine 209, and histidine 327; that span reads RQAGR.

The protein belongs to the uroporphyrinogen decarboxylase family. As to quaternary structure, homodimer.

The protein localises to the cytoplasm. It catalyses the reaction uroporphyrinogen III + 4 H(+) = coproporphyrinogen III + 4 CO2. It functions in the pathway porphyrin-containing compound metabolism; protoporphyrin-IX biosynthesis; coproporphyrinogen-III from 5-aminolevulinate: step 4/4. Its function is as follows. Catalyzes the decarboxylation of four acetate groups of uroporphyrinogen-III to yield coproporphyrinogen-III. The chain is Uroporphyrinogen decarboxylase from Escherichia coli O7:K1 (strain IAI39 / ExPEC).